Consider the following 168-residue polypeptide: MKTHIAWASACLLLVMLTGFFTIGQQTYKIEKLKDKNEVLSEKIKELNHIESTSSASENKAFFEAFFNYSDIDIRYETVKKHTTGKGFDYAFPSRSDQKHTVSVQSELLSLESYSKPLDESHELFLNIVEVATTANSVTTNQVLIVQTTMKKEKDGWLVDNVQVKGNG.

The chain crosses the membrane as a helical span at residues Ile-5–Gly-24.

It localises to the membrane. This is an uncharacterized protein from Bacillus subtilis (strain 168).